We begin with the raw amino-acid sequence, 92 residues long: Phosphoribosyl-ATP pyrophosphatase (92 aa).

The protein belongs to the PRA-PH family.

Its subcellular location is the cytoplasm. It carries out the reaction 1-(5-phospho-beta-D-ribosyl)-ATP + H2O = 1-(5-phospho-beta-D-ribosyl)-5'-AMP + diphosphate + H(+). The protein operates within amino-acid biosynthesis; L-histidine biosynthesis; L-histidine from 5-phospho-alpha-D-ribose 1-diphosphate: step 2/9. This chain is Phosphoribosyl-ATP pyrophosphatase, found in Leptospira borgpetersenii serovar Hardjo-bovis (strain JB197).